A 639-amino-acid chain; its full sequence is Far upstream element-binding protein 1 (639 aa).

Disordered stretches follow at residues 1–27 (MADYSTVPPPSSGSAGGGGGGGVNDAF) and 40–88 (KIGG…LPPM). A2 is subject to N-acetylalanine. Gly residues predominate over residues 14–23 (SAGGGGGGGV). Phosphoserine occurs at positions 48 and 51. Residues 61-73 (RPLEDGDQPDAKK) are compositionally biased toward basic and acidic residues. 3 KH domains span residues 95–159 (VMTE…KRLL), 180–246 (NAVQ…KEMV), and 270–334 (NEGI…AEII). S135 is modified (phosphoserine). At T148 the chain carries Phosphothreonine. Omega-N-methylarginine is present on residues R316, R354, R356, and R358. The segment at 341–360 (VQAGNPGGPGPGGRGRGRGQ) is disordered. The span at 345–360 (NPGGPGPGGRGRGRGQ) shows a compositional bias: gly residues. In terms of domain architecture, KH 4 spans 371–438 (LQEFNFIVPT…QQIDYARQLI (68 aa)). Phosphothreonine is present on T427. Disordered stretches follow at residues 442-527 (IGGP…GTDP) and 543-574 (QAQPPPAAPAGAPTTTQTNGQGDQQNPAPAGQ). The span at 463–500 (PHGPPGPPGPGTPMGPYNPAPYNPGPPGPAPHGPPAPY) shows a compositional bias: pro residues. Residues 551–568 (PAGAPTTTQTNGQGDQQN) show a composition bias toward low complexity. S625 is modified (phosphoserine).

As to quaternary structure, found in a complex with PUF60 and far upstream element (FUSE) DNA segment. Interacts with PUF60 and JTV1. In terms of processing, ubiquitinated. This targets the protein for proteasome-mediated degradation.

The protein localises to the nucleus. Functionally, regulates MYC expression by binding to a single-stranded far-upstream element (FUSE) upstream of the MYC promoter. May act both as activator and repressor of transcription. The protein is Far upstream element-binding protein 1 of Rattus norvegicus (Rat).